We begin with the raw amino-acid sequence, 538 residues long: Putative outer membrane porin BglH (538 aa).

The signal sequence occupies residues 1 to 25; it reads MFRRNIITSAILLMAPLAFSAQSLA.

This sequence belongs to the porin LamB (TC 1.B.3) family.

It is found in the cell outer membrane. May be a sugar porin with a broad carbohydrate specificity. The sequence is that of Putative outer membrane porin BglH (bglH) from Escherichia coli O6:H1 (strain CFT073 / ATCC 700928 / UPEC).